A 533-amino-acid polypeptide reads, in one-letter code: Multicopper oxidase CueO (533 aa).

The segment at residues 1–28 (MHRRDFLKLTAALGAATSLPLWSRAALA) is a signal peptide (tat-type signal). Plastocyanin-like domains follow at residues 53-166 (QTGS…IDDS), 221-290 (PYPQ…DTRD), and 416-532 (AFNF…FTVS). Cu cation is bound by residues His-102, His-104, His-142, and His-144. Positions 458, 461, 463, 514, 515, 516, and 520 each coordinate Cu cation.

It belongs to the multicopper oxidase family. In terms of assembly, monomer. The cofactor is Cu cation. Predicted to be exported by the Tat system. The position of the signal peptide cleavage has not been experimentally proven.

The protein resides in the periplasm. It carries out the reaction 4 Cu(+) + O2 + 4 H(+) = 4 Cu(2+) + 2 H2O. In terms of biological role, multicopper oxidase involved in copper homeostasis and copper tolerance under aerobic conditions. Is responsible for the oxidation of Cu(+) to the less harmful Cu(2+) in the periplasm, thereby preventing Cu(+) from entering the cytoplasm. In Yersinia pestis, this protein is Multicopper oxidase CueO (cueO).